Consider the following 203-residue polypeptide: High frequency lysogenization protein HflD homolog (203 aa).

It belongs to the HflD family.

It localises to the cytoplasm. Its subcellular location is the cell inner membrane. The polypeptide is High frequency lysogenization protein HflD homolog (Vesicomyosocius okutanii subsp. Calyptogena okutanii (strain HA)).